The following is a 126-amino-acid chain: Interleukin-18-binding protein (126 aa).

The first 16 residues, 1-16 (MRILFLIAFMYGCVHS), serve as a signal peptide directing secretion.

This sequence belongs to the orthopoxvirus OPG022 family.

The protein localises to the secreted. Its function is as follows. Soluble IL18-binding protein that may modulate the host antiviral response. The protein is Interleukin-18-binding protein (OPG022) of Cynomys gunnisoni (Gunnison's prairie dog).